Here is a 741-residue protein sequence, read N- to C-terminus: uncharacterized protein (741 aa).

Positions 64–103 (VETLLCMLEQLTIRIEFLTKEIAQQEAAYKDIQNTQKSLV) form a coiled coil. Residues 137–155 (FERQNRTAPLQSKVTTASL) show a composition bias toward polar residues. Disordered stretches follow at residues 137–214 (FERQ…TGLP), 280–318 (RTYSSISSSSSPFKKKTQSHLPNRTTEVPSISKQLSKSS), and 330–364 (SVSSVTKSPSPTPQSAPRAQSASTETAQDLDFLTP). Composition is skewed to low complexity over residues 161 to 173 (RTSMSSSPTASRT) and 197 to 209 (KSKSVLPPSKSLA). Residues 298–308 (SHLPNRTTEVP) show a composition bias toward polar residues. Low complexity-rich tracts occupy residues 309–318 (SISKQLSKSS) and 330–344 (SVSSVTKSPSPTPQS). The segment covering 346 to 356 (PRAQSASTETA) has biased composition (polar residues). 499–506 (GPPGTGKT) contributes to the ATP binding site.

The protein belongs to the AAA ATPase family.

Its subcellular location is the cytoplasm. The protein localises to the nucleus. This is an uncharacterized protein from Schizosaccharomyces pombe (strain 972 / ATCC 24843) (Fission yeast).